A 146-amino-acid polypeptide reads, in one-letter code: Hemoglobin subunit beta/beta' (146 aa).

The Globin domain occupies 2–146; that stretch reads HWSAEEKQLI…VAHALARKYH (145 aa). Heme b contacts are provided by histidine 63 and histidine 92.

Belongs to the globin family. Heterotetramer of two alpha chains and two beta chains. As to expression, red blood cells.

In terms of biological role, involved in oxygen transport from the lung to the various peripheral tissues. The protein is Hemoglobin subunit beta/beta' (HBB) of Chroicocephalus ridibundus (Black-headed gull).